A 505-amino-acid chain; its full sequence is MNNIKKYILTLDEGTTSARALITDKEGNIIAVEQSEFTQYFPKEGWVEHDAIEIWNTQRSALVQVLNKSGIDPSQIEAIGITNQRETAVVWNKETGLPIYNAIVWQDQRTADYCQTFDKDTLEMVKQKSGLIINPYFSGTKVKWILDNVPNARQLAKEGKLMFGTINTWLIYRLTGGEVFVTDHTNAQRTLLYNIHTNDWDDELLKLFDIPRNILPEIKSCSEVYGYTFKGLFSKGNEQRIKIASSIGDQQSALFGQLCLEKGQVKVTYGTGCFILTNTGEEIVKSNHGLLTTVAYSFKDKVYYALEGSVMIAGAAVQWLRDNLRIVYNAIETEWYAGQVKDDRRVYVVPSFTGLGSPYWDSFSRGAIFGLDRGTRREHIVRATLEAIAYQANDVVDAMGKDMKKPIEIFKVDGGAANNKFLMQFQSNISQSKVIKPTNIETTAMGAAFMAGLAVGYWENVEELKKTYKVHFELTPELSKPEVDKLIKGWKVAVQRTFKWVEEIE.

Position 15 (T15) interacts with ADP. ATP contacts are provided by T15, T16, and S17. T15 contributes to the sn-glycerol 3-phosphate binding site. ADP is bound at residue R19. Residues R85, E86, Y136, and D249 each coordinate sn-glycerol 3-phosphate. R85, E86, Y136, D249, and Q250 together coordinate glycerol. ADP contacts are provided by T271 and G314. Residues T271, G314, Q318, and G415 each contribute to the ATP site. Residues G415 and N419 each coordinate ADP.

This sequence belongs to the FGGY kinase family.

It carries out the reaction glycerol + ATP = sn-glycerol 3-phosphate + ADP + H(+). The protein operates within polyol metabolism; glycerol degradation via glycerol kinase pathway; sn-glycerol 3-phosphate from glycerol: step 1/1. Inhibited by fructose 1,6-bisphosphate (FBP). Key enzyme in the regulation of glycerol uptake and metabolism. Catalyzes the phosphorylation of glycerol to yield sn-glycerol 3-phosphate. The sequence is that of Glycerol kinase from Mycoplasma capricolum subsp. capricolum (strain California kid / ATCC 27343 / NCTC 10154).